Reading from the N-terminus, the 305-residue chain is MSAKTAVLLMAYGTPNRIDEVEQYYINVRGGRMPTPEQVENLSARYRAVGGHTPLTTLTKSVTDQLQAQLDAEFPDQYQVYFGMKYWHPLIPDVVKQIHADGISKVIGLALAPHYSKISIGGYQKQVDRANEEFNTNIELTMINSWQEQPKFRNLIANRISEALAQFPADVRDQVTVLFSAHSLPQRVLAWGDPYPDELLGSAKGIAEMLELPDWRFTYQSQGETGEPWLGPDVLDTLAELAAEGKKYVLQVPFGFVCDHLEILYDIDIEGKHKANELGLQLERIRLLNDDPAFVDLLKTVVTGQ.

His182 and Glu262 together coordinate Fe cation.

It belongs to the ferrochelatase family.

It localises to the cytoplasm. It carries out the reaction heme b + 2 H(+) = protoporphyrin IX + Fe(2+). The protein operates within porphyrin-containing compound metabolism; protoheme biosynthesis; protoheme from protoporphyrin-IX: step 1/1. Functionally, catalyzes the ferrous insertion into protoporphyrin IX. This Herpetosiphon aurantiacus (strain ATCC 23779 / DSM 785 / 114-95) protein is Ferrochelatase.